The following is a 76-amino-acid chain: Kappa-actitoxin-Avd4e (76 aa).

An N-terminal signal peptide occupies residues 1–19 (MNKALFLCLVVLCAAVVFA). A propeptide spanning residues 20 to 31 (AEDLQKAKHAPF) is cleaved from the precursor. 3 cysteine pairs are disulfide-bonded: Cys-37–Cys-72, Cys-39–Cys-65, and Cys-55–Cys-73. The Cell attachment site signature appears at 45 to 47 (RGD).

This sequence belongs to the sea anemone type 3 (BDS) potassium channel toxin family. As to expression, moderately expressed in the ectodermal tissue from the distal and proximal tentacles, body wall, and oral disk.

The protein localises to the secreted. Its subcellular location is the nematocyst. Is member of a fraction that shows antiangiogenic activity, since it inhibits human microvascular endothelial cells (HMEC) tubulogenesis. This protein could be a kunitz-type inhibitor with a RGD motif that could block angiogenesis in binding on integrins. Blocks Kv3 voltage-gated potassium channels. Reduces blood pressure. The polypeptide is Kappa-actitoxin-Avd4e (Anemonia viridis (Snakelocks anemone)).